The primary structure comprises 285 residues: Urease accessory protein UreD 1 (285 aa).

This sequence belongs to the UreD family. UreD, UreF and UreG form a complex that acts as a GTP-hydrolysis-dependent molecular chaperone, activating the urease apoprotein by helping to assemble the nickel containing metallocenter of UreC. The UreE protein probably delivers the nickel.

It is found in the cytoplasm. Its function is as follows. Required for maturation of urease via the functional incorporation of the urease nickel metallocenter. This Pseudomonas syringae pv. tomato (strain ATCC BAA-871 / DC3000) protein is Urease accessory protein UreD 1.